The following is a 908-amino-acid chain: Protein translocase subunit SecA (908 aa).

ATP contacts are provided by residues Gln87, 105–109, and Asp512; that span reads GEGKT. The segment at 866–908 is disordered; sequence GSDEDDAIAAHTPMIRDGDKVGRNDPCPCGSGRKYKQCHGKLS. Positions 879 to 888 are enriched in basic and acidic residues; it reads MIRDGDKVGR. The Zn(2+) site is built by Cys892, Cys894, Cys903, and His904. Basic residues predominate over residues 898–908; sequence RKYKQCHGKLS.

Belongs to the SecA family. In terms of assembly, monomer and homodimer. Part of the essential Sec protein translocation apparatus which comprises SecA, SecYEG and auxiliary proteins SecDF-YajC and YidC. Requires Zn(2+) as cofactor.

It localises to the cell inner membrane. The protein resides in the cytoplasm. The enzyme catalyses ATP + H2O + cellular proteinSide 1 = ADP + phosphate + cellular proteinSide 2.. In terms of biological role, part of the Sec protein translocase complex. Interacts with the SecYEG preprotein conducting channel. Has a central role in coupling the hydrolysis of ATP to the transfer of proteins into and across the cell membrane, serving both as a receptor for the preprotein-SecB complex and as an ATP-driven molecular motor driving the stepwise translocation of polypeptide chains across the membrane. In Shewanella oneidensis (strain ATCC 700550 / JCM 31522 / CIP 106686 / LMG 19005 / NCIMB 14063 / MR-1), this protein is Protein translocase subunit SecA.